The following is a 291-amino-acid chain: 4-diphosphocytidyl-2-C-methyl-D-erythritol kinase (291 aa).

The active site involves K11. ATP is bound at residue 95-105; the sequence is PVAAGMAGGSS. D137 is a catalytic residue.

This sequence belongs to the GHMP kinase family. IspE subfamily.

The enzyme catalyses 4-CDP-2-C-methyl-D-erythritol + ATP = 4-CDP-2-C-methyl-D-erythritol 2-phosphate + ADP + H(+). Its pathway is isoprenoid biosynthesis; isopentenyl diphosphate biosynthesis via DXP pathway; isopentenyl diphosphate from 1-deoxy-D-xylulose 5-phosphate: step 3/6. Functionally, catalyzes the phosphorylation of the position 2 hydroxy group of 4-diphosphocytidyl-2C-methyl-D-erythritol. In Lachnoclostridium phytofermentans (strain ATCC 700394 / DSM 18823 / ISDg) (Clostridium phytofermentans), this protein is 4-diphosphocytidyl-2-C-methyl-D-erythritol kinase.